The primary structure comprises 135 residues: MNRSCAMKSCVLILLLALLCAERAQGLNCYNCTMIPFGNTCSSTATCPYPDGVCTIQVAEVVVSSVRLKVKSNLCLPGCPKSPQTPEVLGTVVHVNTDCCNTDLCNAAGPTGGSTWTMAGVLLFILGSVLLQTLL.

Positions 1–26 (MNRSCAMKSCVLILLLALLCAERAQG) are cleaved as a signal peptide. Positions 27-119 (LNCYNCTMIP…PTGGSTWTMA (93 aa)) constitute a UPAR/Ly6 domain. Cystine bridges form between Cys-29–Cys-54, Cys-32–Cys-41, Cys-47–Cys-75, Cys-79–Cys-99, and Cys-100–Cys-105. A lipid anchor (GPI-anchor amidated glycine) is attached at Gly-113. Positions 114–135 (STWTMAGVLLFILGSVLLQTLL) are cleaved as a propeptide — removed in mature form.

It is found in the cell membrane. In Rattus norvegicus (Rat), this protein is Lymphocyte antigen 6B (Ly6b).